A 427-amino-acid polypeptide reads, in one-letter code: Peptidase B (427 aa).

Mn(2+) is bound by residues lysine 195 and aspartate 200. Lysine 207 is a catalytic residue. Residues aspartate 218, aspartate 277, and glutamate 279 each coordinate Mn(2+). The active site involves arginine 281.

This sequence belongs to the peptidase M17 family. As to quaternary structure, homohexamer. The cofactor is Mn(2+).

The protein localises to the cytoplasm. The catalysed reaction is Release of an N-terminal amino acid, Xaa, from a peptide or arylamide. Xaa is preferably Glu or Asp but may be other amino acids, including Leu, Met, His, Cys and Gln.. Functionally, probably plays an important role in intracellular peptide degradation. The polypeptide is Peptidase B (Escherichia coli O127:H6 (strain E2348/69 / EPEC)).